The chain runs to 485 residues: MARLTESEARRQQQQLLQPRPSPVGSSGPEPPGGQPDGMKDLDAIKLFVGQIPRHLDEKDLKPLFEQFGRIYELTVLKDPYTGMHKGCAFLTYCARDSAIKAQTALHEQKTLPGMARPIQVKPADSESRGGRDRKLFVGMLNKQQSEEDVLRLFQPFGVIDECTVLRGPDGSSKGCAFVKFSSHTEAQAAIHALHGSQTMPGASSSLVVKFADTDKERTLRRMQQMVGQLGILTPSLTLPFSPYSAYAQALMQQQTTVLSTSGSYLSPGVAFSPCHIQQIGAVSLNGLPATPIAPASGLHSPPLLGTTAVPGLVAPITNGFAGVVPFPGGHPALETVYANGLVPYPAQSPTVAETLHPAFSGVQQYTAMYPTAAITPIAHSVPQPPPLLQQQQREGPEGCNLFIYHLPQEFGDTELTQMFLPFGNIISSKVFMDRATNQSKCFGFVSFDNPASAQAAIQAMNGFQIGMKRLKVQLKRPKDPGHPY.

Positions 1 to 11 (MARLTESEARR) are enriched in basic and acidic residues. Residues 1 to 40 (MARLTESEARRQQQQLLQPRPSPVGSSGPEPPGGQPDGMK) are disordered. The span at 12–28 (QQQQLLQPRPSPVGSSG) shows a compositional bias: low complexity. 3 RRM domains span residues 45–126 (IKLF…PADS), 134–214 (RKLF…FADT), and 400–478 (CNLF…LKRP).

This sequence belongs to the CELF/BRUNOL family. In terms of tissue distribution, expressed in brain.

It is found in the nucleus. It localises to the cytoplasm. Its function is as follows. RNA-binding protein implicated in the regulation of pre-mRNA alternative splicing. Mediates exon inclusion and/or exclusion in pre-mRNA that are subject to tissue-specific and developmentally regulated alternative splicing. Specifically activates exon 5 inclusion of cardiac isoforms of TNNT2 during heart remodeling at the juvenile to adult transition. Binds to muscle-specific splicing enhancer (MSE) intronic sites flanking the alternative exon 5 of TNNT2 pre-mRNA. The protein is CUGBP Elav-like family member 5 (CELF5) of Homo sapiens (Human).